Consider the following 518-residue polypeptide: Cytochrome P450 704C1 (518 aa).

A run of 2 helical transmembrane segments spans residues 5-25 (ILTM…WIAS) and 299-319 (VILN…SWFI). Cys461 provides a ligand contact to heme.

It belongs to the cytochrome P450 family. The cofactor is heme.

It localises to the membrane. The protein is Cytochrome P450 704C1 (CYP704C1) of Pinus taeda (Loblolly pine).